The chain runs to 358 residues: Valine dehydrogenase (358 aa).

Residue lysine 88 is part of the active site. 188-194 is an NAD(+) binding site; the sequence is GVGKVGH.

This sequence belongs to the Glu/Leu/Phe/Val dehydrogenases family. In terms of assembly, homodimer.

It localises to the cytoplasm. The enzyme catalyses L-valine + NAD(+) + H2O = 3-methyl-2-oxobutanoate + NH4(+) + NADH + H(+). The protein operates within amino-acid degradation; L-valine degradation. In terms of biological role, oxidative deamination of branched-chain amino acids. The catabolism of valine is the major source of fatty acid precursors for macrolide biosynthesis and a vital source of antibiotic precursors. The protein is Valine dehydrogenase (vdh) of Streptomyces virginiae (Streptomyces cinnamonensis).